Here is a 482-residue protein sequence, read N- to C-terminus: MSDPTEFSPPPPTSTDLPPGWLEVTAMDMDAQGVARKPDGKVVFIDGALPTELVSANTHRKKNNWEQASLTEVHRQSSQRVQPGCPHFGLHAGACGGCKMQHLHVAAQVAVKQRVLEDNLWHLGKVKAETILRPIEGPAWGYRYRARLSVRYVPKKDKVLVGFHERKSRYIADMETCKILPPHVDAMLMPLRALIGSMAARDTCPQIELACGDTVTALVLRHLEPLSPEDKDKLRAFAAVHGVQWWLQPKGPETVHLLDEGGEPLAYGLPDFGITMPFKPTDFTQVNPHINRVLVTRALRLLDARKDERVIDWFCGLGNFTLPIATQAREVLGIEGSEALVARSRENYQSNQAQRQDGSALAATSFVARNLFEMTPEMLIADGASDKWLVDPPREGAFALSKALADIHQARIGAEDAPPLPAGHEGWQPPRRIVYVSCNPATLARDAGLLVHQAGYRCVAAGVVNMFPHTAHVESMAVFERG.

The [4Fe-4S] cluster site is built by Cys85, Cys95, Cys98, and Cys177. S-adenosyl-L-methionine is bound by residues Gln285, Phe314, Asn319, Glu335, Asn370, and Asp391. Cys438 acts as the Nucleophile in catalysis.

Belongs to the class I-like SAM-binding methyltransferase superfamily. RNA M5U methyltransferase family. RlmD subfamily.

The enzyme catalyses uridine(1939) in 23S rRNA + S-adenosyl-L-methionine = 5-methyluridine(1939) in 23S rRNA + S-adenosyl-L-homocysteine + H(+). Functionally, catalyzes the formation of 5-methyl-uridine at position 1939 (m5U1939) in 23S rRNA. The chain is 23S rRNA (uracil(1939)-C(5))-methyltransferase RlmD from Acidovorax sp. (strain JS42).